The primary structure comprises 79 residues: Sulfur carrier protein TusA (79 aa).

C16 (cysteine persulfide intermediate) is an active-site residue.

The protein belongs to the sulfur carrier protein TusA family.

Its subcellular location is the cytoplasm. Functionally, sulfur carrier protein which probably makes part of a sulfur-relay system. This chain is Sulfur carrier protein TusA, found in Pseudomonas paraeruginosa (strain DSM 24068 / PA7) (Pseudomonas aeruginosa (strain PA7)).